The following is a 94-amino-acid chain: uncharacterized protein (94 aa).

A signal peptide spans 1-22 (MIMKNCLLLGALLMGFTGVAMA).

This is an uncharacterized protein from Escherichia coli (strain K12).